The primary structure comprises 133 residues: Large ribosomal subunit protein uL22c (133 aa).

This sequence belongs to the universal ribosomal protein uL22 family. Part of the 50S ribosomal subunit.

Its subcellular location is the plastid. The protein localises to the chloroplast. Functionally, this protein binds specifically to 23S rRNA. In terms of biological role, the globular domain of the protein is located near the polypeptide exit tunnel on the outside of the subunit, while an extended beta-hairpin is found that lines the wall of the exit tunnel in the center of the 70S ribosome. This Manihot esculenta (Cassava) protein is Large ribosomal subunit protein uL22c (rpl22).